The chain runs to 465 residues: Transposase for insertion sequence IS1202 (465 aa).

One can recognise an Integrase catalytic domain in the interval 157 to 340 (HPSRPRKKFA…APNPSERNLI (184 aa)).

In terms of biological role, required for the transposition of the insertion element. The chain is Transposase for insertion sequence IS1202 from Streptococcus pneumoniae.